A 275-amino-acid chain; its full sequence is Lectin 8 (275 aa).

The N-terminal stretch at 1–31 is a signal peptide; sequence MANSNPKLLVTQNPFSVFLLTFLLLITNVKS. 2 N-linked (GlcNAc...) asparagine glycosylation sites follow: Asn-55 and Asn-150.

The protein belongs to the leguminous lectin family.

In terms of biological role, may be involved in arbuscular mycorrhizal (AM) symbiosis with AM fungi. The chain is Lectin 8 from Medicago truncatula (Barrel medic).